We begin with the raw amino-acid sequence, 101 residues long: MNVAEFHQKVEQVWQQIEEKIDDEALSIDTEIHGAVCTLTFDDESQIIINKQEAMLELWLASKLGGFHFAFRDCEWVTAEGRSFWAHLEEAFARHGEQISF.

It belongs to the frataxin family.

Its function is as follows. Involved in iron-sulfur (Fe-S) cluster assembly. May act as a regulator of Fe-S biogenesis. The sequence is that of Iron-sulfur cluster assembly protein CyaY from Actinobacillus pleuropneumoniae serotype 7 (strain AP76).